Here is a 238-residue protein sequence, read N- to C-terminus: LexA repressor (238 aa).

The segment at residues 26–46 (FDEMKDALELRSKSGIHRLIS) is a DNA-binding region (H-T-H motif). Catalysis depends on for autocatalytic cleavage activity residues S159 and K197.

This sequence belongs to the peptidase S24 family. In terms of assembly, homodimer.

It catalyses the reaction Hydrolysis of Ala-|-Gly bond in repressor LexA.. Represses a number of genes involved in the response to DNA damage (SOS response), including recA and lexA. In the presence of single-stranded DNA, RecA interacts with LexA causing an autocatalytic cleavage which disrupts the DNA-binding part of LexA, leading to derepression of the SOS regulon and eventually DNA repair. The polypeptide is LexA repressor (Gluconobacter oxydans (strain 621H) (Gluconobacter suboxydans)).